The chain runs to 310 residues: Putative dihydroorotate dehydrogenase A (fumarate) (310 aa).

Substrate is bound by residues Lys-45, 69-73, and Asn-128; that span reads NSMGL. 45 to 46 is a binding site for FMN; sequence KT. Asn-128 is a binding site for FMN. Cys-131 serves as the catalytic Nucleophile. FMN is bound by residues Lys-165 and Val-193. 194–195 provides a ligand contact to substrate; the sequence is NS. Residues Gly-220, 248 to 249, and 270 to 271 contribute to the FMN site; these read GG and GT.

Belongs to the dihydroorotate dehydrogenase family. Type 1 subfamily. As to quaternary structure, homodimer. The cofactor is FMN.

The protein localises to the cytoplasm. The catalysed reaction is (S)-dihydroorotate + fumarate = orotate + succinate. It participates in pyrimidine metabolism; UMP biosynthesis via de novo pathway. Catalyzes the conversion of dihydroorotate to orotate with fumarate as the electron acceptor. This Streptococcus agalactiae serotype Ia (strain ATCC 27591 / A909 / CDC SS700) protein is Putative dihydroorotate dehydrogenase A (fumarate) (pyrD).